The sequence spans 346 residues: Ribosomal RNA small subunit methyltransferase H (346 aa).

S-adenosyl-L-methionine contacts are provided by residues 53–55 (GGY), Asp70, Phe97, Asp114, and Gln121.

This sequence belongs to the methyltransferase superfamily. RsmH family.

The protein resides in the cytoplasm. It catalyses the reaction cytidine(1402) in 16S rRNA + S-adenosyl-L-methionine = N(4)-methylcytidine(1402) in 16S rRNA + S-adenosyl-L-homocysteine + H(+). Its function is as follows. Specifically methylates the N4 position of cytidine in position 1402 (C1402) of 16S rRNA. This chain is Ribosomal RNA small subunit methyltransferase H, found in Bartonella henselae (strain ATCC 49882 / DSM 28221 / CCUG 30454 / Houston 1) (Rochalimaea henselae).